We begin with the raw amino-acid sequence, 925 residues long: Probable dipeptidyl-aminopeptidase B (925 aa).

The segment at 1–104 (MTPYRDVPPV…RHAQKKGPGM (104 aa)) is disordered. Topologically, residues 1 to 110 (MTPYRDVPPV…GPGMDRGMRR (110 aa)) are cytoplasmic. A compositionally biased stretch (low complexity) spans 31–40 (ESGSSVSTTS). Basic and acidic residues predominate over residues 55–72 (LSEKQPRGDDNEDALKDE). A helical; Signal-anchor for type II membrane protein transmembrane segment spans residues 111-131 (ALLIAAGLLVSAWVAGLFVYI). Residues 132 to 925 (ATKSYKPASA…PKPNGKRRAA (794 aa)) are Vacuolar-facing. N-linked (GlcNAc...) asparagine glycosylation occurs at Asn-369. Catalysis depends on Ser-773, which acts as the Charge relay system. Asn-832 carries an N-linked (GlcNAc...) asparagine glycan. Catalysis depends on charge relay system residues Asp-850 and His-883.

This sequence belongs to the peptidase S9B family.

The protein resides in the vacuole membrane. It catalyses the reaction Release of an N-terminal dipeptide, Xaa-Yaa-|-Zaa-, from a polypeptide, preferentially when Yaa is Pro, provided Zaa is neither Pro nor hydroxyproline.. Its function is as follows. Type IV dipeptidyl-peptidase which removes N-terminal dipeptides sequentially from polypeptides having unsubstituted N-termini provided that the penultimate residue is proline. The sequence is that of Probable dipeptidyl-aminopeptidase B (DAPB) from Chaetomium globosum (strain ATCC 6205 / CBS 148.51 / DSM 1962 / NBRC 6347 / NRRL 1970) (Soil fungus).